Consider the following 134-residue polypeptide: UPF0719 transmembrane protein YshE (134 aa).

The next 4 membrane-spanning stretches (helical) occupy residues 10-30, 48-68, 78-98, and 114-134; these read VEIA…LTVF, AVAM…QHSI, IGWG…FEFL, and AVGF…AAGI.

This sequence belongs to the UPF0719 family.

The protein localises to the cell membrane. The polypeptide is UPF0719 transmembrane protein YshE (yshE) (Bacillus subtilis (strain 168)).